The sequence spans 152 residues: Ribonuclease pancreatic (152 aa).

Positions 1–24 (MALDKSVILLPLLVLVLLVLGCLG) are cleaved as a signal peptide. Substrate contacts are provided by K31 and R34. The active-site Proton acceptor is the H36. N-linked (GlcNAc...) asparagine glycosylation is present at N46. Disulfide bonds link C50-C108, C64-C119, C82-C134, and C89-C96. Residues 65-69 (KPVNT), K90, and R109 contribute to the substrate site. A glycan (N-linked (GlcNAc...) asparagine) is linked at N112. The Proton donor role is filled by H143.

The protein belongs to the pancreatic ribonuclease family. As to quaternary structure, monomer. Interacts with and forms tight 1:1 complexes with RNH1. Dimerization of two such complexes may occur. Interaction with RNH1 inhibits this protein.

The protein resides in the secreted. It catalyses the reaction an [RNA] containing cytidine + H2O = an [RNA]-3'-cytidine-3'-phosphate + a 5'-hydroxy-ribonucleotide-3'-[RNA].. The enzyme catalyses an [RNA] containing uridine + H2O = an [RNA]-3'-uridine-3'-phosphate + a 5'-hydroxy-ribonucleotide-3'-[RNA].. Its function is as follows. Endonuclease that catalyzes the cleavage of RNA on the 3' side of pyrimidine nucleotides. Acts on single-stranded and double-stranded RNA. The chain is Ribonuclease pancreatic (RNASE1) from Papio hamadryas (Hamadryas baboon).